Consider the following 272-residue polypeptide: Cell division protein ZipA (272 aa).

The Periplasmic portion of the chain corresponds to 1–4 (METH). A helical transmembrane segment spans residues 5–25 (ILFFILAGLLIAVLIGYSIWS). At 26 to 272 (ARREKSRIFS…RQNYLLRVAN (247 aa)) the chain is on the cytoplasmic side.

Belongs to the ZipA family. Interacts with FtsZ via their C-terminal domains.

It localises to the cell inner membrane. Essential cell division protein that stabilizes the FtsZ protofilaments by cross-linking them and that serves as a cytoplasmic membrane anchor for the Z ring. Also required for the recruitment to the septal ring of downstream cell division proteins. This Glaesserella parasuis serovar 5 (strain SH0165) (Haemophilus parasuis) protein is Cell division protein ZipA.